The primary structure comprises 131 residues: MTTKRKPYVRGMQPNWWTKLGFYRFYITREGTCLPQLWFSLVVLFGVFALKNGPESWAGFVGFLSNPIVMLINIVTLIATVFHTATWFKLAPKAVNIVVKDEKLPQEPIVRGLWGLTIVVTVVILAVALIV.

A run of 3 helical transmembrane segments spans residues 30-50, 58-78, and 109-129; these read EGTCLPQLWFSLVVLFGVFAL, AGFVGFLSNPIVMLINIVTLI, and IVRGLWGLTIVVTVVILAVAL.

This sequence belongs to the FrdC family. Part of an enzyme complex containing four subunits: a flavoprotein (FrdA), an iron-sulfur protein (FrdB), and two hydrophobic anchor proteins (FrdC and FrdD).

The protein resides in the cell inner membrane. Its function is as follows. Two distinct, membrane-bound, FAD-containing enzymes are responsible for the catalysis of fumarate and succinate interconversion; fumarate reductase is used in anaerobic growth, and succinate dehydrogenase is used in aerobic growth. Anchors the catalytic components of the fumarate reductase complex to the cell inner membrane, binds quinones. This Proteus mirabilis (strain HI4320) protein is Fumarate reductase subunit C.